A 442-amino-acid chain; its full sequence is Putative neutral sphingomyelinase (442 aa).

Glu-46 provides a ligand contact to Mg(2+). The active-site Proton acceptor is the His-264. Positions 309-330 (ALTGEDDQSSQHQPEIQCNGSS) are disordered. A compositionally biased stretch (polar residues) spans 318-330 (SQHQPEIQCNGSS). Helical transmembrane passes span 362–384 (RILY…EFTA) and 391–413 (IFLL…ASIW).

The protein belongs to the neutral sphingomyelinase family.

Its subcellular location is the membrane. The catalysed reaction is a sphingomyelin + H2O = phosphocholine + an N-acylsphing-4-enine + H(+). It participates in lipid metabolism; sphingolipid metabolism. The chain is Putative neutral sphingomyelinase from Drosophila melanogaster (Fruit fly).